A 151-amino-acid chain; its full sequence is Globin CTT-IIIA (151 aa).

Residues 8–147 enclose the Globin domain; it reads SMTDAQVAAV…MFHVIFNALD (140 aa). His98 lines the heme b pocket.

Belongs to the globin family. Monomer.

The sequence is that of Globin CTT-IIIA from Chironomus thummi thummi (Midge).